The chain runs to 1001 residues: Sarcoplasmic/endoplasmic reticulum calcium ATPase 1 (1001 aa).

Over 1–48 (MEAAHSKSTEECLAYFGVSETTGLTPDQVKRHLEKYGHNELPAEEGKS) the chain is Cytoplasmic. Residues 49 to 69 (LWELVIEQFEDLLVRILLLAA) form a helical membrane-spanning segment. Residues 70 to 89 (CISFVLAWFEEGEETITAFV) lie on the Lumenal side of the membrane. The helical transmembrane segment at 90-110 (EPFVILLILIANAIVGVWQER) threads the bilayer. Over 111 to 253 (NAENAIEALK…QDKTPLQQKL (143 aa)) the chain is Cytoplasmic. A helical membrane pass occupies residues 254-273 (DEFGEQLSKVISLICVAVWL). Residues 274 to 295 (INIGHFNDPVHGGSWIRGAIYY) lie on the Lumenal side of the membrane. A helical membrane pass occupies residues 296–313 (FKIAVALAVAAIPEGLPA). V304, A305, I307, and E309 together coordinate Ca(2+). The Cytoplasmic segment spans residues 314–757 (VITTCLALGT…EEGRAIYNNM (444 aa)). The active-site 4-aspartylphosphate intermediate is the D351. The Mg(2+) site is built by D351 and T353. T353 serves as a coordination point for ATP. A Phosphothreonine modification is found at T441. ATP is bound by residues E442, R489, K515, and R560. Residue T569 is modified to Phosphothreonine. Phosphoserine is present on S581. 5 residues coordinate ATP: T625, G626, D627, R678, and K684. Mg(2+) is bound at residue D703. N706 contributes to the ATP binding site. Residues 758–777 (KQFIRYLISSNVGEVVCIFL) form a helical membrane-spanning segment. Ca(2+) contacts are provided by N768 and E771. The Lumenal segment spans residues 778 to 787 (TAALGLPEAL). A helical transmembrane segment spans residues 788–808 (IPVQLLWVNLVTDGLPATALG). Positions 788–808 (IPVQLLWVNLVTDGLPATALG) are interaction with PLN. 3 residues coordinate Ca(2+): N796, T799, and D800. The Cytoplasmic segment spans residues 809-828 (FNPPDLDIMDRPPRSPKEPL). A helical transmembrane segment spans residues 829-851 (ISGWLFFRYMAIGGYVGAATVGA). The Lumenal segment spans residues 852–897 (AAWWFMYAEDGPGVTYHQLTHFMQCTEDHPHFEGLDCEIFEAPEPM). A disulfide bridge connects residues C876 and C888. A helical transmembrane segment spans residues 898–917 (TMALSVLVTIEMCNALNSLS). E908 contributes to the Ca(2+) binding site. Residues 918-930 (ENQSLMRMPPWVN) are Cytoplasmic-facing. Residues 931–949 (IWLLGSICLSMSLHFLILY) form a helical membrane-spanning segment. The interaction with PLN stretch occupies residues 932-943 (WLLGSICLSMSL). The Lumenal portion of the chain corresponds to 950–964 (VDPLPMIFKLKALDL). Residues 965–985 (TQWLMVLKISLPVIGLDEILK) form a helical membrane-spanning segment. Over 986 to 1001 (FIARNYLEDPEDERRK) the chain is Cytoplasmic.

Belongs to the cation transport ATPase (P-type) (TC 3.A.3) family. Type IIA subfamily. Interacts with sarcolipin (SLN). Interacts with phospholamban (PLN). Interacts with myoregulin (MRLN). Interacts with DWORF. Interacts with VMP1. The cofactor is Mg(2+). In terms of tissue distribution, skeletal muscle (at protein level). Skeletal muscle, fast twitch muscle (type II) fibers.

Its subcellular location is the endoplasmic reticulum membrane. The protein localises to the sarcoplasmic reticulum membrane. It catalyses the reaction Ca(2+)(in) + ATP + H2O = Ca(2+)(out) + ADP + phosphate + H(+). Inhibited by sarcolipin (SLN) and myoregulin (MRLN). Has also been shown to be reversibly inhibited by phospholamban (PLN) at low calcium concentrations in vitro. Dephosphorylated PLN decreases the apparent affinity of the ATPase for calcium and this inhibition is regulated by the phosphorylation of PLN in vitro. Enhanced by DWORF; DWORF increases activity by displacing sarcolipin (SLN), phospholamban (PLN) and myoregulin (MRLN). Key regulator of striated muscle performance by acting as the major Ca(2+) ATPase responsible for the reuptake of cytosolic Ca(2+) into the sarcoplasmic reticulum. Catalyzes the hydrolysis of ATP coupled with the translocation of calcium from the cytosol to the sarcoplasmic reticulum lumen. Contributes to calcium sequestration involved in muscular excitation/contraction. This is Sarcoplasmic/endoplasmic reticulum calcium ATPase 1 (ATP2A1) from Oryctolagus cuniculus (Rabbit).